The chain runs to 108 residues: UPF0060 membrane protein CKO_01576 (108 aa).

4 helical membrane passes run 6–26, 29–49, 61–81, and 85–105; these read LLFF…WLWL, GATA…VWLL, AAYG…VDGV, and LYDW…VAGW.

Belongs to the UPF0060 family.

The protein localises to the cell inner membrane. This is UPF0060 membrane protein CKO_01576 from Citrobacter koseri (strain ATCC BAA-895 / CDC 4225-83 / SGSC4696).